The following is a 214-amino-acid chain: Cell division protein SepF (214 aa).

The tract at residues 24–120 is disordered; it reads DNYEEYEERK…NTRRAQESTA (97 aa). A compositionally biased stretch (basic and acidic residues) spans 30–40; that stretch reads EERKAVNEPPR. The span at 55 to 67 shows a compositional bias: polar residues; that stretch reads ESYSQPAYTQQSE. Basic and acidic residues predominate over residues 69 to 98; it reads VVEKPSARYRSAEAHQERDTQQAAYTEKKV. Positions 101 to 120 are enriched in polar residues; that stretch reads MRSSNQSATTNTRRAQESTA.

It belongs to the SepF family. As to quaternary structure, homodimer. Interacts with FtsZ.

It is found in the cytoplasm. Its function is as follows. Cell division protein that is part of the divisome complex and is recruited early to the Z-ring. Probably stimulates Z-ring formation, perhaps through the cross-linking of FtsZ protofilaments. Its function overlaps with FtsA. This chain is Cell division protein SepF, found in Enterococcus faecalis (strain ATCC 700802 / V583).